Here is a 691-residue protein sequence, read N- to C-terminus: Glycine--tRNA ligase beta subunit (691 aa).

Belongs to the class-II aminoacyl-tRNA synthetase family. In terms of assembly, tetramer of two alpha and two beta subunits.

It localises to the cytoplasm. The enzyme catalyses tRNA(Gly) + glycine + ATP = glycyl-tRNA(Gly) + AMP + diphosphate. The protein is Glycine--tRNA ligase beta subunit of Buchnera aphidicola subsp. Schizaphis graminum (strain Sg).